A 295-amino-acid polypeptide reads, in one-letter code: Delta-1-pyrroline-5-carboxylate reductase apf3 (295 aa).

Belongs to the pyrroline-5-carboxylate reductase family.

It participates in secondary metabolite biosynthesis. Delta-1-pyrroline-5-carboxylate reductase; part of the gene cluster that mediates the biosynthesis of the cyclic tetrapeptide apicidin F (APF). The non-ribosomal peptide synthetase apf1 incorporates four different amino acids to produce apicidin F: L-phenylalanine, D-pipecolic acid (D-pip), N-methoxy-L-tryptophan and L-2-aminooctanedioic acid. L-Phenylalanine is the only proteinogenic amino acid directly used by apf1. The 3 other apf1 substrates are non-proteinogenic and have to be modified by other enzymes of the cluster. Lysine is converted to delta-1-pyrroline-5-carboxylate (P5C) which is reduced to L-pipecolic acid (L-pip) by apf3. L-pip is epimerized to D-pip, probably by apf1 activity, prior to incorporation. L-Tryptophan is N-oxidyzed by one of the cytochrome P450 monooxygenases (apf7 or apf8), and further methylated at the hydroxy group by the O-methyltransferase apf6 to yield N-methoxy-L-tryptophan. The synthesis of the fourth apf1 substrate is more complex. The fatty acid synthase apf5 is involved in the synthesis of the octanoic acid backbone of L-2-aminooctanedioic acid by fixing one acetyl-CoA unit and three malonyl-CoA units. Then one of the cytochrome P450 monooxygenases (apf7 or apf8) may oxidize this backbone to 2-oxooctanoic acid. The aminotransferase apf4 is predicted to catalyze the exchange of the keto group with an amino group. The next step would be the oxidation of 2-aminooctanoic acid by one of the cytochrome P450 monooxygenases (apf7 or apf8). The last step is the oxidation of 2-amino-8-hydroxyoctanoic acid to 2-aminooctanedioic acid is catalyzed by the FAD-dependent monooxygenase apf9. The chain is Delta-1-pyrroline-5-carboxylate reductase apf3 from Gibberella fujikuroi (strain CBS 195.34 / IMI 58289 / NRRL A-6831) (Bakanae and foot rot disease fungus).